A 361-amino-acid polypeptide reads, in one-letter code: Histidinol-phosphate aminotransferase (361 aa).

The residue at position 218 (K218) is an N6-(pyridoxal phosphate)lysine.

This sequence belongs to the class-II pyridoxal-phosphate-dependent aminotransferase family. Histidinol-phosphate aminotransferase subfamily. As to quaternary structure, homodimer. Pyridoxal 5'-phosphate is required as a cofactor.

It carries out the reaction L-histidinol phosphate + 2-oxoglutarate = 3-(imidazol-4-yl)-2-oxopropyl phosphate + L-glutamate. It functions in the pathway amino-acid biosynthesis; L-histidine biosynthesis; L-histidine from 5-phospho-alpha-D-ribose 1-diphosphate: step 7/9. This Dinoroseobacter shibae (strain DSM 16493 / NCIMB 14021 / DFL 12) protein is Histidinol-phosphate aminotransferase.